We begin with the raw amino-acid sequence, 579 residues long: Arginine--tRNA ligase (579 aa).

Residues 123 to 133 (PNLAKEMHVGH) carry the 'HIGH' region motif.

It belongs to the class-I aminoacyl-tRNA synthetase family. As to quaternary structure, monomer.

The protein resides in the cytoplasm. The catalysed reaction is tRNA(Arg) + L-arginine + ATP = L-arginyl-tRNA(Arg) + AMP + diphosphate. This Saccharophagus degradans (strain 2-40 / ATCC 43961 / DSM 17024) protein is Arginine--tRNA ligase.